The following is a 429-amino-acid chain: D-galactonate dehydratase family member Caci_4410 (429 aa).

Residues 1–22 (MTDANHLLDPSGALPQTRPPWT) form a disordered region. Residue aspartate 233 participates in Mg(2+) binding. Histidine 235 contacts D-arabinonate. Residues glutamate 259 and glutamate 285 each coordinate Mg(2+). 4 residues coordinate D-arabinonate: glutamate 285, arginine 306, histidine 335, and glutamate 362.

Belongs to the mandelate racemase/muconate lactonizing enzyme family. GalD subfamily.

Its function is as follows. Has no detectable activity with D-mannonate and with a panel of 70 other acid sugars (in vitro), in spite of the conservation of the residues that are expected to be important for catalytic activity and cofactor binding. May have evolved a divergent function. This chain is D-galactonate dehydratase family member Caci_4410, found in Catenulispora acidiphila (strain DSM 44928 / JCM 14897 / NBRC 102108 / NRRL B-24433 / ID139908).